The following is a 314-amino-acid chain: Methionyl-tRNA formyltransferase (314 aa).

111-114 serves as a coordination point for (6S)-5,6,7,8-tetrahydrofolate; the sequence is SLLP.

This sequence belongs to the Fmt family.

It catalyses the reaction L-methionyl-tRNA(fMet) + (6R)-10-formyltetrahydrofolate = N-formyl-L-methionyl-tRNA(fMet) + (6S)-5,6,7,8-tetrahydrofolate + H(+). Functionally, attaches a formyl group to the free amino group of methionyl-tRNA(fMet). The formyl group appears to play a dual role in the initiator identity of N-formylmethionyl-tRNA by promoting its recognition by IF2 and preventing the misappropriation of this tRNA by the elongation apparatus. The polypeptide is Methionyl-tRNA formyltransferase (Nitrobacter winogradskyi (strain ATCC 25391 / DSM 10237 / CIP 104748 / NCIMB 11846 / Nb-255)).